The following is a 417-amino-acid chain: Secreted aspartic protease 4 (417 aa).

Positions 1–18 (MFLQNILSVLAFALLIDA) are cleaved as a signal peptide. Positions 19–75 (APVKRSTGFVTLDFNVKRSLVDPKDPTVEVKRSPLFLDIEPTEIPVDDTGRNDVGKR) are cleaved as a propeptide — activation peptide. One can recognise a Peptidase A1 domain in the interval 89–403 (YSADITIGSN…DLDDRKISMA (315 aa)). Asp-107 is a catalytic residue. 107-109 (DTG) serves as a coordination point for pepstatin A. Cys-122 and Cys-134 form a disulfide bridge. Asn-137 carries N-linked (GlcNAc...) asparagine glycosylation. Position 160–161 (160–161 (AD)) interacts with pepstatin A. Residue Asp-267 coordinates Zn(2+). The active site involves Asp-293. Residue 293–297 (DSGTT) coordinates pepstatin A. Cysteines 331 and 369 form a disulfide.

This sequence belongs to the peptidase A1 family. As to quaternary structure, monomer.

The protein resides in the secreted. The enzyme catalyses Preferential cleavage at the carboxyl of hydrophobic amino acids, but fails to cleave 15-Leu-|-Tyr-16, 16-Tyr-|-Leu-17 and 24-Phe-|-Phe-25 of insulin B chain. Activates trypsinogen, and degrades keratin.. With respect to regulation, activity is inhibited by squash aspartic peptidase inhibitor (SQAPI). Functionally, secreted aspartic peptidases (SAPs) are a group of ten acidic hydrolases considered as key virulence factors. These enzymes supply the fungus with nutrient amino acids as well as are able to degrade the selected host's proteins involved in the immune defense. Moreover, acts toward human hemoglobin though limited proteolysis to generate a variety of antimicrobial hemocidins, enabling to compete with the other microorganisms of the same physiological niche using the microbicidal peptides generated from the host protein. Its function is as follows. Plays a key role in defense against host by cleaving histatin-5 (Hst 5), a peptide from human saliva that carries out fungicidal activity. The cleavage rate decreases in an order of SAP2 &gt; SAP9 &gt; SAP3 &gt; SAP7 &gt; SAP4 &gt; SAP1 &gt; SAP8. The first cleavage occurs between residues 'Lys-17' and 'His-18' of Hst 5, giving DSHAKRHHGYKRKFHEK and HHSHRGY peptides. Simultaneously, the DSHAKRHHGY and KRKFHEKHHSHRGY peptides are also formed. The protein is Secreted aspartic protease 4 of Candida albicans (strain SC5314 / ATCC MYA-2876) (Yeast).